A 207-amino-acid chain; its full sequence is Na(+)-translocating NADH-quinone reductase subunit D (207 aa).

Transmembrane regions (helical) follow at residues I20 to A40, F41 to I61, I69 to L89, V102 to M122, F130 to L150, and N177 to I197.

This sequence belongs to the NqrDE/RnfAE family. As to quaternary structure, composed of six subunits; NqrA, NqrB, NqrC, NqrD, NqrE and NqrF.

It is found in the cell inner membrane. It catalyses the reaction a ubiquinone + n Na(+)(in) + NADH + H(+) = a ubiquinol + n Na(+)(out) + NAD(+). In terms of biological role, NQR complex catalyzes the reduction of ubiquinone-1 to ubiquinol by two successive reactions, coupled with the transport of Na(+) ions from the cytoplasm to the periplasm. NqrA to NqrE are probably involved in the second step, the conversion of ubisemiquinone to ubiquinol. This Haemophilus ducreyi (strain 35000HP / ATCC 700724) protein is Na(+)-translocating NADH-quinone reductase subunit D.